The primary structure comprises 70 residues: Cytochrome c oxidase subunit 8B, mitochondrial (70 aa).

The transit peptide at 1–24 (MLRLAPTVRLLQAPLRGWAVPKAH) directs the protein to the mitochondrion. Topologically, residues 25-35 (ITAKPAKTPTS) are mitochondrial matrix. Residues 36–59 (PKEQAIGLSVTFLSFLLPAGWVLY) form a helical membrane-spanning segment. Residues 60–70 (HLDNYKKSSAA) lie on the Mitochondrial intermembrane side of the membrane.

Belongs to the cytochrome c oxidase VIII family. Component of the cytochrome c oxidase (complex IV, CIV), a multisubunit enzyme composed of 14 subunits. The complex is composed of a catalytic core of 3 subunits MT-CO1, MT-CO2 and MT-CO3, encoded in the mitochondrial DNA, and 11 supernumerary subunits COX4I1 (or COX4I2), COX5A, COX5B, COX6A2 (or COX6A1), COX6B1 (or COX6B2), COX6C, COX7A1 (or COX7A2), COX7B, COX7C, COX8B and NDUFA4, which are encoded in the nuclear genome. The complex exists as a monomer or a dimer and forms supercomplexes (SCs) in the inner mitochondrial membrane with NADH-ubiquinone oxidoreductase (complex I, CI) and ubiquinol-cytochrome c oxidoreductase (cytochrome b-c1 complex, complex III, CIII), resulting in different assemblies (supercomplex SCI(1)III(2)IV(1) and megacomplex MCI(2)III(2)IV(2)).

It localises to the mitochondrion inner membrane. It participates in energy metabolism; oxidative phosphorylation. In terms of biological role, component of the cytochrome c oxidase, the last enzyme in the mitochondrial electron transport chain which drives oxidative phosphorylation. The respiratory chain contains 3 multisubunit complexes succinate dehydrogenase (complex II, CII), ubiquinol-cytochrome c oxidoreductase (cytochrome b-c1 complex, complex III, CIII) and cytochrome c oxidase (complex IV, CIV), that cooperate to transfer electrons derived from NADH and succinate to molecular oxygen, creating an electrochemical gradient over the inner membrane that drives transmembrane transport and the ATP synthase. Cytochrome c oxidase is the component of the respiratory chain that catalyzes the reduction of oxygen to water. Electrons originating from reduced cytochrome c in the intermembrane space (IMS) are transferred via the dinuclear copper A center (CU(A)) of subunit 2 and heme A of subunit 1 to the active site in subunit 1, a binuclear center (BNC) formed by heme A3 and copper B (CU(B)). The BNC reduces molecular oxygen to 2 water molecules using 4 electrons from cytochrome c in the IMS and 4 protons from the mitochondrial matrix. The protein is Cytochrome c oxidase subunit 8B, mitochondrial (COX8B) of Bos taurus (Bovine).